The following is a 129-amino-acid chain: Protein Turandot B1 (129 aa).

The N-terminal stretch at 1-21 (MNSATSLMCFALLLISPLCMG) is a signal peptide.

Belongs to the Turandot family.

It localises to the secreted. Functionally, a humoral factor that may play a role in stress tolerance. The chain is Protein Turandot B1 (TotB1) from Drosophila erecta (Fruit fly).